A 360-amino-acid polypeptide reads, in one-letter code: MAIKRLINEHDMELWNNSKTFEDVIGFINTLALSVRGRENNDYTQPISDNVQRVSNLLSKVTEIIGKHEVIKDANTSRFGKIEFRDFYDDISEHSNELISKIFEGIEKPDTGKLDDICTYFINSWGDRSRIDYGSGHELNFICFLYCLTESKVFDLENDSSNIVLMLFIKYLGIMRSLELKYWLEPAGSHGVWGLDDYHFLPFLFGAFQLSTHKHLKPKSIHNPEVVEMFQDRYLYFGCIAFINKVKTTASLRWHSPMLDDISGVKRWSKVAEGMVKMYKAEVLQKLPIMQHFYFGYFLKCPEGVSEPSARAQDHHEDDSCCTDGSHGHSTWADCCGIAVPSAIAASQMANKDVRLFPFD.

It belongs to the PTPA-type PPIase family.

The protein localises to the cytoplasm. The catalysed reaction is [protein]-peptidylproline (omega=180) = [protein]-peptidylproline (omega=0). Its function is as follows. PPIases accelerate the folding of proteins. It catalyzes the cis-trans isomerization of proline imidic peptide bonds in oligopeptides. Acts as a regulatory subunit for PP2A-like phosphatases modulating their activity or substrate specificity, probably by inducing a conformational change in the catalytic subunit, a direct target of the PPIase. Can reactivate inactive phosphatase PP2A-phosphatase methylesterase complexes (PP2Ai) in presence of ATP and Mg(2+) by dissociating the inactive form from the complex. The protein is Serine/threonine-protein phosphatase 2A activator 2 (RRD2) of Kluyveromyces lactis (strain ATCC 8585 / CBS 2359 / DSM 70799 / NBRC 1267 / NRRL Y-1140 / WM37) (Yeast).